The primary structure comprises 357 residues: MERGVRVFGEPKVELHIHLDGAIRPETILHFGKKRGVPLPGSTVDELMKHVSYQTPLSLKLFLEKFNHYMPAIAGDREAVRRIAYELVETKAKEGVVYVEVRYSPHLLANCRVEPIPWGQAEGDLTPEEVVNLVNQGLQDGERNFRIKARSILCCMRHMPSWSPEVVELCKKYQNNSVVAIDLAGDELLMASSDHKAAYEEAERCGIHRTVHAGEAGPATMIKEAVYLLKAERIGHGYHVLEDPELYRELLRTRMHFEVCPWSSYLTGACLPDFRKHPVVQFKKDQANYSINTDDPLIFNSNIDKDYGIVKEYMDFTEEDFKRVNINAAQSSFLPEKEKQELLNTLYEAYGMVPATS.

Residues His16 and His18 each coordinate Zn(2+). Substrate contacts are provided by His18, Asp20, and Gly185. His212 provides a ligand contact to Zn(2+). Glu215 serves as the catalytic Proton donor. Asp294 contributes to the Zn(2+) binding site. Asp295 provides a ligand contact to substrate.

The protein belongs to the metallo-dependent hydrolases superfamily. Adenosine and AMP deaminases family. Zn(2+) is required as a cofactor.

Its subcellular location is the cell membrane. The protein resides in the cell junction. It localises to the cytoplasmic vesicle lumen. The protein localises to the cytoplasm. It is found in the lysosome. The catalysed reaction is adenosine + H2O + H(+) = inosine + NH4(+). The enzyme catalyses 2'-deoxyadenosine + H2O + H(+) = 2'-deoxyinosine + NH4(+). Functionally, catalyzes the hydrolytic deamination of adenosine and 2-deoxyadenosine. Plays an important role in purine metabolism and in adenosine homeostasis. Modulates signaling by extracellular adenosine, and so contributes indirectly to cellular signaling events. May act as a positive regulator of T-cell coactivation. The chain is Adenosine deaminase (ADA) from Gallus gallus (Chicken).